Reading from the N-terminus, the 309-residue chain is Mitochondrial import receptor subunit TOM34 (309 aa).

Phosphoserine is present on serine 8. TPR repeat units follow at residues 9–42 (VEEL…LQAQ), 51–84 (SVLY…VPFS), and 86–118 (KPLL…DDNV). Serine 160 is subject to Phosphoserine. Residues 161-189 (LPSENHKEMAKSKSKETTATKNRVPSAGD) are disordered. Residues 164 to 178 (ENHKEMAKSKSKETT) are compositionally biased toward basic and acidic residues. A Phosphoserine modification is found at serine 186. 3 TPR repeats span residues 193 to 226 (ARVL…SNLE), 227 to 260 (SATY…DGKN), and 262 to 294 (KAFY…EPRN). A Glycyl lysine isopeptide (Lys-Gly) (interchain with G-Cter in SUMO2) cross-link involves residue lysine 197.

The protein belongs to the Tom34 family. In terms of assembly, interacts with HSP90A, VCP, ATP6V1D, KIAA0665, AMPK, and DMAP1 through its TPR repeat. Ubiquitous.

The protein resides in the cytoplasm. Its subcellular location is the mitochondrion outer membrane. Its function is as follows. Plays a role in the import of cytosolically synthesized preproteins into mitochondria. Binds the mature portion of precursor proteins. Interacts with cellular components, and possesses weak ATPase activity. May be a chaperone-like protein that helps to keep newly synthesized precursors in an unfolded import compatible state. This is Mitochondrial import receptor subunit TOM34 (TOMM34) from Homo sapiens (Human).